The following is a 440-amino-acid chain: Trigger factor (440 aa).

Residues 160-253 (KDTVIGDALR…VTEVKRLELP (94 aa)) form the PPIase FKBP-type domain.

Belongs to the FKBP-type PPIase family. Tig subfamily.

It localises to the cytoplasm. It catalyses the reaction [protein]-peptidylproline (omega=180) = [protein]-peptidylproline (omega=0). Its function is as follows. Involved in protein export. Acts as a chaperone by maintaining the newly synthesized protein in an open conformation. Functions as a peptidyl-prolyl cis-trans isomerase. This chain is Trigger factor, found in Chlorobium chlorochromatii (strain CaD3).